Reading from the N-terminus, the 330-residue chain is Ketol-acid reductoisomerase (NADP(+)) (330 aa).

The KARI N-terminal Rossmann domain maps to 2-182 (VKVYYDADAN…GCTKAGVFET (181 aa)). Residues 25 to 28 (YGSQ), Arg-48, Ser-51, and 83 to 86 (DEIQ) each bind NADP(+). His-108 is an active-site residue. Position 134 (Gly-134) interacts with NADP(+). Residues 183–328 (SFREETETDL…ARLREMMPWL (146 aa)) enclose the KARI C-terminal knotted domain. Residues Asp-191, Glu-195, Glu-227, and Glu-231 each contribute to the Mg(2+) site. Position 252 (Ser-252) interacts with substrate.

This sequence belongs to the ketol-acid reductoisomerase family. Mg(2+) is required as a cofactor.

The catalysed reaction is (2R)-2,3-dihydroxy-3-methylbutanoate + NADP(+) = (2S)-2-acetolactate + NADPH + H(+). The enzyme catalyses (2R,3R)-2,3-dihydroxy-3-methylpentanoate + NADP(+) = (S)-2-ethyl-2-hydroxy-3-oxobutanoate + NADPH + H(+). Its pathway is amino-acid biosynthesis; L-isoleucine biosynthesis; L-isoleucine from 2-oxobutanoate: step 2/4. The protein operates within amino-acid biosynthesis; L-valine biosynthesis; L-valine from pyruvate: step 2/4. Involved in the biosynthesis of branched-chain amino acids (BCAA). Catalyzes an alkyl-migration followed by a ketol-acid reduction of (S)-2-acetolactate (S2AL) to yield (R)-2,3-dihydroxy-isovalerate. In the isomerase reaction, S2AL is rearranged via a Mg-dependent methyl migration to produce 3-hydroxy-3-methyl-2-ketobutyrate (HMKB). In the reductase reaction, this 2-ketoacid undergoes a metal-dependent reduction by NADPH to yield (R)-2,3-dihydroxy-isovalerate. In Desulforamulus reducens (strain ATCC BAA-1160 / DSM 100696 / MI-1) (Desulfotomaculum reducens), this protein is Ketol-acid reductoisomerase (NADP(+)).